The chain runs to 248 residues: uncharacterized protein (248 aa).

The ABC transporter domain maps to 7–246 (VQLSNLSWTF…PASTILLPTS (240 aa)). ATP is bound at residue 43–50 (GQSGSGKS).

Belongs to the ABC transporter superfamily.

This is an uncharacterized protein from Mycobacterium tuberculosis (strain CDC 1551 / Oshkosh).